The chain runs to 485 residues: UDP-N-acetylmuramate--L-alanine ligase (485 aa).

ATP is bound at residue 120-126; that stretch reads GSHGKTT.

Belongs to the MurCDEF family.

It is found in the cytoplasm. The enzyme catalyses UDP-N-acetyl-alpha-D-muramate + L-alanine + ATP = UDP-N-acetyl-alpha-D-muramoyl-L-alanine + ADP + phosphate + H(+). It participates in cell wall biogenesis; peptidoglycan biosynthesis. Cell wall formation. The chain is UDP-N-acetylmuramate--L-alanine ligase from Rickettsia peacockii (strain Rustic).